A 346-amino-acid chain; its full sequence is 4-hydroxy-2-oxohexanoate aldolase (346 aa).

A Pyruvate carboxyltransferase domain is found at 7-259 (VRITDTSLRD…KTGIDFFDIA (253 aa)). 15-16 (RD) lines the substrate pocket. Mn(2+) is bound at residue aspartate 16. Histidine 19 functions as the Proton acceptor in the catalytic mechanism. Substrate-binding residues include serine 169 and histidine 198. Mn(2+) contacts are provided by histidine 198 and histidine 200. Tyrosine 289 serves as a coordination point for substrate.

This sequence belongs to the 4-hydroxy-2-oxovalerate aldolase family. As to quaternary structure, homodimer. Forms a heterotetramer composed of two aldolase (HsaF) and two dehydrogenase (HsaG) subunits. The cofactor is Mn(2+).

It carries out the reaction (S)-4-hydroxy-2-oxohexanoate = propanal + pyruvate. It catalyses the reaction (S)-4-hydroxy-2-oxopentanoate = acetaldehyde + pyruvate. Functionally, involved in cholesterol degradation. Catalyzes the retro-aldol cleavage of 4-hydroxy-2-oxohexanoate (HOHA) to pyruvate and propanal. Can also catalyze the cleavage of 4-hydroxy-2-oxopentanoate (HOPA) to pyruvate and acetaldehyde. The aldehydes produced by this reaction are directly channeled to the dehydrogenase HsaG. The sequence is that of 4-hydroxy-2-oxohexanoate aldolase from Mycobacterium bovis (strain ATCC BAA-935 / AF2122/97).